The chain runs to 182 residues: Ribosome-recycling factor (182 aa).

Residues 136–156 (VKKQEKDGDFSEDQSRDEQDS) form a disordered region.

The protein belongs to the RRF family.

It is found in the cytoplasm. Responsible for the release of ribosomes from messenger RNA at the termination of protein biosynthesis. May increase the efficiency of translation by recycling ribosomes from one round of translation to another. This Synechococcus sp. (strain CC9902) protein is Ribosome-recycling factor.